The sequence spans 382 residues: MIKSALLVLEDGTQFHGRAIGATGSAVGEVVFNTSMTGYQEILTDPSYSRQIVTLTYPHIGNVGTNDADEESSQVHAQGLVIRDLPLIASNFRNTEDLSSYLKRHNIVAIADIDTRKLTRLLREKGAQNGCIIAGDNPDAALALEKARAFPGLNGMDLAKEVTTAEAYSWTQGSWTLTGGLPEAKKEDELPFHVVAYDFGAKRNILRMLVDRGCRLTIVPAQTSAEDVLKMNPDGIFLSNGPGDPAPCDYAITAIQKFLETDIPVFGICLGHQLLALASGAKTVKMKFGHHGGNHPVKDVEKNVVMITAQNHGFAVDEATLPANLRVTHKSLFDGTLQGIHRTDKPAFSFQGHPEASPGPHDAAPLFDHFIELIEQYRKTAK.

Positions 1–189 (MIKSALLVLE…GLPEAKKEDE (189 aa)) are CPSase. Residues Ser-47, Gly-241, and Gly-243 each coordinate L-glutamine. Residues 193–380 (HVVAYDFGAK…IELIEQYRKT (188 aa)) form the Glutamine amidotransferase type-1 domain. Residue Cys-269 is the Nucleophile of the active site. 5 residues coordinate L-glutamine: Leu-270, Gln-273, Asn-311, Gly-313, and Phe-314. Active-site residues include His-353 and Glu-355.

It belongs to the CarA family. As to quaternary structure, composed of two chains; the small (or glutamine) chain promotes the hydrolysis of glutamine to ammonia, which is used by the large (or ammonia) chain to synthesize carbamoyl phosphate. Tetramer of heterodimers (alpha,beta)4.

It carries out the reaction hydrogencarbonate + L-glutamine + 2 ATP + H2O = carbamoyl phosphate + L-glutamate + 2 ADP + phosphate + 2 H(+). The enzyme catalyses L-glutamine + H2O = L-glutamate + NH4(+). It participates in amino-acid biosynthesis; L-arginine biosynthesis; carbamoyl phosphate from bicarbonate: step 1/1. Its pathway is pyrimidine metabolism; UMP biosynthesis via de novo pathway; (S)-dihydroorotate from bicarbonate: step 1/3. In terms of biological role, small subunit of the glutamine-dependent carbamoyl phosphate synthetase (CPSase). CPSase catalyzes the formation of carbamoyl phosphate from the ammonia moiety of glutamine, carbonate, and phosphate donated by ATP, constituting the first step of 2 biosynthetic pathways, one leading to arginine and/or urea and the other to pyrimidine nucleotides. The small subunit (glutamine amidotransferase) binds and cleaves glutamine to supply the large subunit with the substrate ammonia. The sequence is that of Carbamoyl phosphate synthase small chain from Escherichia coli O157:H7.